Consider the following 500-residue polypeptide: Protein nucleotidyltransferase YdiU (500 aa).

8 residues coordinate ATP: Gly96, Gly98, Arg99, Lys119, Asp131, Gly132, Arg182, and Arg189. Residue Asp258 is the Proton acceptor of the active site. Residues Asn259 and Asp268 each coordinate Mg(2+). Asp268 contributes to the ATP binding site.

The protein belongs to the SELO family. Mg(2+) serves as cofactor. Requires Mn(2+) as cofactor.

It catalyses the reaction L-seryl-[protein] + ATP = 3-O-(5'-adenylyl)-L-seryl-[protein] + diphosphate. The catalysed reaction is L-threonyl-[protein] + ATP = 3-O-(5'-adenylyl)-L-threonyl-[protein] + diphosphate. It carries out the reaction L-tyrosyl-[protein] + ATP = O-(5'-adenylyl)-L-tyrosyl-[protein] + diphosphate. The enzyme catalyses L-histidyl-[protein] + UTP = N(tele)-(5'-uridylyl)-L-histidyl-[protein] + diphosphate. It catalyses the reaction L-seryl-[protein] + UTP = O-(5'-uridylyl)-L-seryl-[protein] + diphosphate. The catalysed reaction is L-tyrosyl-[protein] + UTP = O-(5'-uridylyl)-L-tyrosyl-[protein] + diphosphate. Its function is as follows. Nucleotidyltransferase involved in the post-translational modification of proteins. It can catalyze the addition of adenosine monophosphate (AMP) or uridine monophosphate (UMP) to a protein, resulting in modifications known as AMPylation and UMPylation. This chain is Protein nucleotidyltransferase YdiU, found in Rhizobium etli (strain CIAT 652).